Reading from the N-terminus, the 564-residue chain is Probable metalloprotease ARX1 (564 aa).

This sequence belongs to the peptidase M24 family. As to quaternary structure, component of the nucleoplasmic and cytoplasmic pre-60S ribosomal particles.

It is found in the cytoplasm. The protein resides in the nucleus. Its function is as follows. Probable metalloprotease involved in proper assembly of pre-ribosomal particles during the biogenesis of the 60S ribosomal subunit. Accompanies the pre-60S particles to the cytoplasm. This Debaryomyces hansenii (strain ATCC 36239 / CBS 767 / BCRC 21394 / JCM 1990 / NBRC 0083 / IGC 2968) (Yeast) protein is Probable metalloprotease ARX1 (ARX1).